The sequence spans 66 residues: Large ribosomal subunit protein uL29 (66 aa).

It belongs to the universal ribosomal protein uL29 family.

This Bacillus licheniformis (strain ATCC 14580 / DSM 13 / JCM 2505 / CCUG 7422 / NBRC 12200 / NCIMB 9375 / NCTC 10341 / NRRL NRS-1264 / Gibson 46) protein is Large ribosomal subunit protein uL29.